We begin with the raw amino-acid sequence, 333 residues long: 2-haloacrylate reductase (333 aa).

NADP(+) is bound at residue alanine 153–glycine 159.

Belongs to the zinc-containing alcohol dehydrogenase family.

The catalysed reaction is (S)-2-chloropropanoate + NADP(+) = 2-chloroacrylate + NADPH + H(+). In terms of biological role, involved in the degradation of unsaturated organohalogen compounds. Catalyzes the NADPH-dependent reduction of the carbon-carbon double bond of 2-chloroacrylate to produce (S)-2-chloropropionate, which is probably further metabolized to (R)-lactate by (S)-2-haloacid dehalogenase. Can also use 2-bromoacrylate as substrate. Does not act on acrylate, methacrylate, 1,4-benzoquinone and 1,4-naphthoquinone. This Burkholderia sp protein is 2-haloacrylate reductase.